The sequence spans 326 residues: Peroxidase 46 (326 aa).

An N-terminal signal peptide occupies residues 1-27 (MASSYRINCSTLLHLLMFLSSLLTSSA). The N-linked (GlcNAc...) asparagine glycan is linked to Asn-28. 4 disulfides stabilise this stretch: Cys-38-Cys-114, Cys-71-Cys-76, Cys-120-Cys-322, and Cys-199-Cys-233. His-69 serves as the catalytic Proton acceptor. Ca(2+)-binding residues include Asp-70, Val-73, Gly-75, Asp-77, and Ser-79. Asn-85 is a glycosylation site (N-linked (GlcNAc...) asparagine). Heme b is bound at residue His-192. Ca(2+) is bound at residue Thr-193. 3 residues coordinate Ca(2+): Asp-246, Thr-249, and Asp-254. Asn-278 carries an N-linked (GlcNAc...) asparagine glycan.

It belongs to the peroxidase family. Classical plant (class III) peroxidase subfamily. Heme b serves as cofactor. It depends on Ca(2+) as a cofactor.

Its subcellular location is the secreted. It carries out the reaction 2 a phenolic donor + H2O2 = 2 a phenolic radical donor + 2 H2O. Functionally, removal of H(2)O(2), oxidation of toxic reductants, biosynthesis and degradation of lignin, suberization, auxin catabolism, response to environmental stresses such as wounding, pathogen attack and oxidative stress. These functions might be dependent on each isozyme/isoform in each plant tissue. This chain is Peroxidase 46 (PER46), found in Arabidopsis thaliana (Mouse-ear cress).